We begin with the raw amino-acid sequence, 172 residues long: Zinc finger protein 580 (172 aa).

The interval Met-1 to Ser-93 is disordered. Residues Met-19–Pro-30 are compositionally biased toward pro residues. A Glycyl lysine isopeptide (Lys-Gly) (interchain with G-Cter in SUMO2) cross-link involves residue Lys-31. Over residues Lys-31–Gly-44 the composition is skewed to low complexity. Positions Gly-75 to Pro-86 are enriched in pro residues. The segment at Tyr-92–His-114 adopts a C2H2-type 1 zinc-finger fold. Lys-118 participates in a covalent cross-link: Glycyl lysine isopeptide (Lys-Gly) (interchain with G-Cter in SUMO2). 2 C2H2-type zinc fingers span residues Phe-120–His-142 and His-150–His-172.

In terms of assembly, interacts with SMAD2. In terms of tissue distribution, expressed in endothelial cells.

It localises to the nucleus. Functionally, involved in the regulation of endothelial cell proliferation and migration. Mediates H(2)O(2)-induced leukocyte chemotaxis by elevating interleukin-8 production and may play a role in inflammation. May be involved in transcriptional regulation. This chain is Zinc finger protein 580 (ZNF580), found in Homo sapiens (Human).